A 467-amino-acid polypeptide reads, in one-letter code: Tubulointerstitial nephritis antigen-like (467 aa).

Residues 1-21 (MWGCPLGLLLLLLAGQAALEA) form the signal peptide. One can recognise an SMB domain in the interval 49 to 96 (EQDMCCRGRADECALPYLGATCYCDLFCNRTVSDCCPDFWDFCLGIPP). Disulfide bonds link Cys53-Cys72, Cys70-Cys72, Cys70-Cys84, Cys76-Cys83, and Cys84-Cys91. A glycan (N-linked (GlcNAc...) asparagine) is linked at Asn77. N-linked (GlcNAc...) asparagine glycosylation is present at Asn160.

The protein belongs to the peptidase C1 family. Post-translationally, glycosylated.

The protein resides in the secreted. Its function is as follows. May be implicated in the adrenocortical zonation and in mechanisms for repressing the CYP11B1 gene expression in adrenocortical cells. This is a non catalytic peptidase C1 family protein. The chain is Tubulointerstitial nephritis antigen-like (Tinagl1) from Rattus norvegicus (Rat).